Consider the following 229-residue polypeptide: Flagellar brake protein YcgR (229 aa).

Residues 134 to 218 (QLSLRVLDVS…GERALQRYID (85 aa)) form the PilZ domain.

It belongs to the YcgR family. As to quaternary structure, monomer. Interacts with the flagellar basal bodies.

The protein resides in the bacterial flagellum basal body. In terms of biological role, acts as a flagellar brake, regulating swimming and swarming in a bis-(3'-5') cyclic diguanylic acid (c-di-GMP)-dependent manner. Binds 1 c-di-GMP dimer per subunit. Increasing levels of c-di-GMP lead to decreased motility. The polypeptide is Flagellar brake protein YcgR (Methylibium petroleiphilum (strain ATCC BAA-1232 / LMG 22953 / PM1)).